We begin with the raw amino-acid sequence, 325 residues long: NADH-quinone oxidoreductase subunit H (325 aa).

8 helical membrane passes run 11–31 (ILISVLKAVVILLVVVTCGAF), 81–101 (AIFTLAPVIAFTSLLLSFAIV), 114–134 (IGILFFLMMAGLAVYAVLFAG), 154–174 (LSYEVFLGLSLMGVVAQAGSF), 186–206 (VWNVIPQFFGFLTFAIAGVAV), 237–257 (FFVGEYIGIVTVSALIVTLFF), 265–285 (LPPFIWFALKTAFFMVMFILI), and 304–324 (VCLPLTLLNLLATAAVILYNA).

Belongs to the complex I subunit 1 family. In terms of assembly, NDH-1 is composed of 13 different subunits. Subunits NuoA, H, J, K, L, M, N constitute the membrane sector of the complex.

Its subcellular location is the cell inner membrane. It catalyses the reaction a quinone + NADH + 5 H(+)(in) = a quinol + NAD(+) + 4 H(+)(out). In terms of biological role, NDH-1 shuttles electrons from NADH, via FMN and iron-sulfur (Fe-S) centers, to quinones in the respiratory chain. The immediate electron acceptor for the enzyme in this species is believed to be ubiquinone. Couples the redox reaction to proton translocation (for every two electrons transferred, four hydrogen ions are translocated across the cytoplasmic membrane), and thus conserves the redox energy in a proton gradient. This subunit may bind ubiquinone. The polypeptide is NADH-quinone oxidoreductase subunit H (Yersinia pseudotuberculosis serotype O:1b (strain IP 31758)).